A 153-amino-acid chain; its full sequence is UPF0178 protein Ccel_2994 (153 aa).

It belongs to the UPF0178 family.

In Ruminiclostridium cellulolyticum (strain ATCC 35319 / DSM 5812 / JCM 6584 / H10) (Clostridium cellulolyticum), this protein is UPF0178 protein Ccel_2994.